Reading from the N-terminus, the 159-residue chain is Putative pre-16S rRNA nuclease (159 aa).

It belongs to the YqgF nuclease family.

Its subcellular location is the cytoplasm. Functionally, could be a nuclease involved in processing of the 5'-end of pre-16S rRNA. The polypeptide is Putative pre-16S rRNA nuclease (Thermobifida fusca (strain YX)).